We begin with the raw amino-acid sequence, 145 residues long: Basic phospholipase A2 textilotoxin A chain (145 aa).

The N-terminal stretch at 1–19 is a signal peptide; that stretch reads MHPAHLLVLLGVCVSLLGA. The propeptide occupies 20–27; the sequence is SDIPPLPL. 7 disulfide bridges follow: cysteine 38–cysteine 98, cysteine 54–cysteine 144, cysteine 56–cysteine 72, cysteine 71–cysteine 125, cysteine 78–cysteine 118, cysteine 87–cysteine 111, and cysteine 105–cysteine 116. The Ca(2+) site is built by tyrosine 55, glycine 57, and glycine 59. Residue histidine 75 is part of the active site. Aspartate 76 is a binding site for Ca(2+). The active site involves aspartate 119.

It belongs to the phospholipase A2 family. Group I subfamily. D49 sub-subfamily. In terms of assembly, heterohexamer. 2 forms exist: 2 A or 2 B chains, 2 C chains and 2 covalently-linked D chains, and 1 A or 1 B, 1 C, 2 covalently-linked D chains and 2 differentially glycosylated covalently-linked D chains. Textilotoxin was originally described as pentameric. Requires Ca(2+) as cofactor. In terms of tissue distribution, expressed by the venom gland.

It is found in the secreted. It carries out the reaction a 1,2-diacyl-sn-glycero-3-phosphocholine + H2O = a 1-acyl-sn-glycero-3-phosphocholine + a fatty acid + H(+). Its function is as follows. Snake venom oligomeric phospholipase A2 that has potent presynaptic neurotoxicity. Chain A possesses a very low toxicity, but is essential for neurotoxicity. Possesses a low enzymatic activity. PLA2 catalyzes the calcium-dependent hydrolysis of the 2-acyl groups in 3-sn-phosphoglycerides. This chain is Basic phospholipase A2 textilotoxin A chain, found in Pseudonaja textilis (Eastern brown snake).